We begin with the raw amino-acid sequence, 508 residues long: Chromosomal replication initiator protein DnaA (508 aa).

Residues 1-90 (MSVELWQQCV…RRSSAPRAAP (90 aa)) are domain I, interacts with DnaA modulators. The segment at 91–171 (NAPVSAAVAA…QVEGALKHTS (81 aa)) is domain II. The tract at residues 130 to 160 (EVEEPSSRDSFDSMSDSGSVPAASGRTEQRT) is disordered. The domain III, AAA+ region stretch occupies residues 172-388 (YLNRTFTFET…GALKRVIAHS (217 aa)). Residues Gly-216, Gly-218, Lys-219, and Thr-220 each contribute to the ATP site. A domain IV, binds dsDNA region spans residues 389 to 508 (HFMGRDITIE…YKNLLRTLTT (120 aa)).

This sequence belongs to the DnaA family. As to quaternary structure, oligomerizes as a right-handed, spiral filament on DNA at oriC.

The protein resides in the cytoplasm. Plays an essential role in the initiation and regulation of chromosomal replication. ATP-DnaA binds to the origin of replication (oriC) to initiate formation of the DNA replication initiation complex once per cell cycle. Binds the DnaA box (a 9 base pair repeat at the origin) and separates the double-stranded (ds)DNA. Forms a right-handed helical filament on oriC DNA; dsDNA binds to the exterior of the filament while single-stranded (ss)DNA is stabiized in the filament's interior. The ATP-DnaA-oriC complex binds and stabilizes one strand of the AT-rich DNA unwinding element (DUE), permitting loading of DNA polymerase. After initiation quickly degrades to an ADP-DnaA complex that is not apt for DNA replication. Binds acidic phospholipids. This is Chromosomal replication initiator protein DnaA from Pseudomonas entomophila (strain L48).